We begin with the raw amino-acid sequence, 143 residues long: Small ribosomal subunit protein uS9 (143 aa).

A disordered region spans residues 123–143 (RPEPKKFGGRGARSRFQKSYR). Basic residues predominate over residues 134–143 (ARSRFQKSYR).

The protein belongs to the universal ribosomal protein uS9 family.

This chain is Small ribosomal subunit protein uS9 (RPS16), found in Kluyveromyces lactis (strain ATCC 8585 / CBS 2359 / DSM 70799 / NBRC 1267 / NRRL Y-1140 / WM37) (Yeast).